A 222-amino-acid polypeptide reads, in one-letter code: Pyridoxine/pyridoxamine 5'-phosphate oxidase (222 aa).

Substrate is bound by residues 14-17 and lysine 71; that span reads RRNY. FMN is bound by residues 66–71, 81–82, arginine 87, lysine 88, and glutamine 110; these read RTVLLK and FT. Tyrosine 128, arginine 132, and serine 136 together coordinate substrate. FMN is bound by residues 145–146 and tryptophan 190; that span reads QS. A substrate-binding site is contributed by 196–198; sequence RLN. Arginine 200 is a binding site for FMN.

This sequence belongs to the pyridoxamine 5'-phosphate oxidase family. Homodimer. FMN is required as a cofactor.

The catalysed reaction is pyridoxamine 5'-phosphate + O2 + H2O = pyridoxal 5'-phosphate + H2O2 + NH4(+). The enzyme catalyses pyridoxine 5'-phosphate + O2 = pyridoxal 5'-phosphate + H2O2. The protein operates within cofactor metabolism; pyridoxal 5'-phosphate salvage; pyridoxal 5'-phosphate from pyridoxamine 5'-phosphate: step 1/1. It participates in cofactor metabolism; pyridoxal 5'-phosphate salvage; pyridoxal 5'-phosphate from pyridoxine 5'-phosphate: step 1/1. Its function is as follows. Catalyzes the oxidation of either pyridoxine 5'-phosphate (PNP) or pyridoxamine 5'-phosphate (PMP) into pyridoxal 5'-phosphate (PLP). In Prochlorococcus marinus (strain MIT 9303), this protein is Pyridoxine/pyridoxamine 5'-phosphate oxidase.